A 420-amino-acid polypeptide reads, in one-letter code: Gamma-glutamyl phosphate reductase (420 aa).

This sequence belongs to the gamma-glutamyl phosphate reductase family.

It localises to the cytoplasm. The catalysed reaction is L-glutamate 5-semialdehyde + phosphate + NADP(+) = L-glutamyl 5-phosphate + NADPH + H(+). Its pathway is amino-acid biosynthesis; L-proline biosynthesis; L-glutamate 5-semialdehyde from L-glutamate: step 2/2. Catalyzes the NADPH-dependent reduction of L-glutamate 5-phosphate into L-glutamate 5-semialdehyde and phosphate. The product spontaneously undergoes cyclization to form 1-pyrroline-5-carboxylate. In Cereibacter sphaeroides (strain KD131 / KCTC 12085) (Rhodobacter sphaeroides), this protein is Gamma-glutamyl phosphate reductase.